Consider the following 732-residue polypeptide: B-cadherin (732 aa).

A propeptide spanning residues 1-6 is cleaved from the precursor; it reads LRRQKR. Cadherin domains are found at residues 6 to 114, 115 to 227, 228 to 339, 340 to 443, and 444 to 554; these read RDWV…KPQF, TQEV…APEF, DPKT…APVF, DPPL…VNDH, and GPEP…RVDT. Residues 6-554 are Extracellular-facing; the sequence is RDWVIPPIKV…SCAQKPRVDT (549 aa). A glycan (N-linked (GlcNAc...) asparagine) is linked at N137. N410 carries an N-linked (GlcNAc...) asparagine glycan. The helical transmembrane segment at 555–580 threads the bilayer; sequence GVPIVLAVLGAVLALLLVLLLLLLLV. The Cytoplasmic segment spans residues 581 to 732; sequence RRRKVVKEPL…ELYGGGEDEE (152 aa).

Expressed in a wide variety of tissues.

The protein localises to the cell membrane. In terms of biological role, cadherins are calcium-dependent cell adhesion proteins. They preferentially interact with themselves in a homophilic manner in connecting cells; cadherins may thus contribute to the sorting of heterogeneous cell types. B-cadherin may have important functions in neurogenesis, in at least some epithelia, and in embryogenesis. This Gallus gallus (Chicken) protein is B-cadherin (K-CAM).